Consider the following 520-residue polypeptide: 4-hydroxyphenylacetate 3-monooxygenase oxygenase component (520 aa).

FAD is bound by residues 155–157 and threonine 196; that span reads HAI.

Belongs to the FADH(2)-utilizing monooxygenase family. As to quaternary structure, homodimer. HPA 3-hydroxylase consists of a reductase component HpaC and an oxygenase component HpaB. Some form of interactions between the reductase and the oxygenase facilitate the transfer of FADH(-) to the oxygenase in P.aeruginosa, although interactions are not required in other species.

The enzyme catalyses 4-hydroxyphenylacetate + FADH2 + O2 = 3,4-dihydroxyphenylacetate + FAD + H2O + H(+). Its pathway is aromatic compound metabolism; 4-hydroxyphenylacetate degradation; pyruvate and succinate semialdehyde from 4-hydroxyphenylacetate: step 1/7. Functionally, oxygenase component of the 4-hydroxyphenylacetate (HPA) 3-hydroxylase. Catalyzes the hydroxylation of 4-hydroxyphenylacetate to form 3,4-dihydroxyphenylacetate, using FADH(-) provided by the reductase component HpaC to activate oxygen. To a lesser extent, can also use reduced FMN. In vitro, has hydroxylation activity toward tyrosol and various cinnamic acid derivatives, catalyzing the hydroxylation of p-coumaric acid, caffeic acid, ferulic acid, and coniferaldehyde. This chain is 4-hydroxyphenylacetate 3-monooxygenase oxygenase component, found in Pseudomonas aeruginosa (strain ATCC 15692 / DSM 22644 / CIP 104116 / JCM 14847 / LMG 12228 / 1C / PRS 101 / PAO1).